We begin with the raw amino-acid sequence, 351 residues long: Columbamine O-methyltransferase (351 aa).

Residues Gly-198, Asp-221, Asp-241, Met-242, and Lys-255 each contribute to the S-adenosyl-L-methionine site. His-259 (proton acceptor) is an active-site residue.

Belongs to the class I-like SAM-binding methyltransferase superfamily. Cation-independent O-methyltransferase family. COMT subfamily. As to quaternary structure, homodimer.

It carries out the reaction columbamine + S-adenosyl-L-methionine = palmatine + S-adenosyl-L-homocysteine + H(+). The catalysed reaction is (S)-tetrahydrocolumbamine + S-adenosyl-L-methionine = (S)-tetrahydropalmatine + S-adenosyl-L-homocysteine + H(+). It functions in the pathway alkaloid biosynthesis; palmatine biosynthesis; palmatine from columbamine: step 1/1. Functionally, catalyzes the conversion of tetrahydrocolumbamine to (S)-tetrahydropalmatine and of columbamine to palmatine, an isoquinoline alkaloid. The protein is Columbamine O-methyltransferase of Coptis japonica (Japanese goldthread).